The sequence spans 424 residues: Serine--tRNA ligase (424 aa).

229 to 231 (TAE) provides a ligand contact to L-serine. 260–262 (RSE) is a binding site for ATP. E283 provides a ligand contact to L-serine. Residue 347–350 (EISS) coordinates ATP. S383 provides a ligand contact to L-serine.

It belongs to the class-II aminoacyl-tRNA synthetase family. Type-1 seryl-tRNA synthetase subfamily. As to quaternary structure, homodimer. The tRNA molecule binds across the dimer.

It localises to the cytoplasm. It carries out the reaction tRNA(Ser) + L-serine + ATP = L-seryl-tRNA(Ser) + AMP + diphosphate + H(+). The enzyme catalyses tRNA(Sec) + L-serine + ATP = L-seryl-tRNA(Sec) + AMP + diphosphate + H(+). It functions in the pathway aminoacyl-tRNA biosynthesis; selenocysteinyl-tRNA(Sec) biosynthesis; L-seryl-tRNA(Sec) from L-serine and tRNA(Sec): step 1/1. In terms of biological role, catalyzes the attachment of serine to tRNA(Ser). Is also able to aminoacylate tRNA(Sec) with serine, to form the misacylated tRNA L-seryl-tRNA(Sec), which will be further converted into selenocysteinyl-tRNA(Sec). In Gluconacetobacter diazotrophicus (strain ATCC 49037 / DSM 5601 / CCUG 37298 / CIP 103539 / LMG 7603 / PAl5), this protein is Serine--tRNA ligase.